The following is a 407-amino-acid chain: Argininosuccinate synthase (407 aa).

ATP contacts are provided by residues 11 to 19 (AYSGGLDTS) and Ala-38. L-citrulline contacts are provided by Tyr-91 and Ser-96. Gly-121 provides a ligand contact to ATP. L-aspartate-binding residues include Thr-123, Asn-127, and Asp-128. Residue Asn-127 coordinates L-citrulline. L-citrulline-binding residues include Arg-131, Ser-181, Ser-190, Glu-266, and Tyr-278.

The protein belongs to the argininosuccinate synthase family. Type 1 subfamily. As to quaternary structure, homotetramer.

It is found in the cytoplasm. It carries out the reaction L-citrulline + L-aspartate + ATP = 2-(N(omega)-L-arginino)succinate + AMP + diphosphate + H(+). It functions in the pathway amino-acid biosynthesis; L-arginine biosynthesis; L-arginine from L-ornithine and carbamoyl phosphate: step 2/3. The polypeptide is Argininosuccinate synthase (Campylobacter concisus (strain 13826)).